The sequence spans 367 residues: Metacaspase-1 (367 aa).

The segment at 47–77 is disordered; sequence DPRTAPPPQPSSAPSPPPQIHAPPGQLPHPH. Residues 50-73 show a composition bias toward pro residues; that stretch reads TAPPPQPSSAPSPPPQIHAPPGQL. Active-site residues include H164 and C220.

This sequence belongs to the peptidase C14B family. Interacts (via N-terminus) with LSD1. Post-translationally, proteolytically processed; by an autocatalytic mechanism.

In terms of biological role, cysteine protease that cleaves specifically after arginine or lysine residues. Does not cleave caspase-specific substrates. Acts as a positive regulator of cell death. Required for both oxidative stress cell death response and hypersensitive cell death response mediated by immune response. The protein is Metacaspase-1 (AMC1) of Arabidopsis thaliana (Mouse-ear cress).